The sequence spans 219 residues: Cytidylate kinase (219 aa).

11-19 (GPAGVGKTT) provides a ligand contact to ATP.

The protein belongs to the cytidylate kinase family. Type 1 subfamily.

The protein localises to the cytoplasm. The catalysed reaction is CMP + ATP = CDP + ADP. The enzyme catalyses dCMP + ATP = dCDP + ADP. This is Cytidylate kinase from Oleidesulfovibrio alaskensis (strain ATCC BAA-1058 / DSM 17464 / G20) (Desulfovibrio alaskensis).